We begin with the raw amino-acid sequence, 580 residues long: MLLNSSFISLPSFFKSQELGRTNLLIHRNGSPLLCYATNTNVSQRKSANYQPNIWNYDILQSLKHDYEDARYVDRSRRLQEEVKRMIKDENVNILELIDTVKQLGLSYHFEEEIGEALDRFLSLEKCSGRNNFGRSLHETALRFRLLREYGYDISPDIFEKFKDHNGNFKACLVQDIKGMLSLYDASFLSYEGEQILDEANAFTSIHLKDLSEGRSSILIDQVNHSLELPLYRRVQSLEARWFIDSYENRKDANKVLLEAAKLNFNIVQSTLQQDLKEMSRWWKGMGLAPRLSFGRDRLMECFFWAAGMTPFEPQFSNIRKGLTKVCSLITLIDDIYDVYGTLDELELFTTAVESWDINAIQILPEYMKIFFLALYTTVNDFTYDTIKETGHDILPYLVKVWSDMLKAFLQEAKWCHNKHMPKFDDYLNNAWVSVSGVVLLTHSYFLLNRNITKEGLGYLENCPMLLQTPSIIFRLCNDLATSSAELERGEGANSIICYMNENGVSEEVAYKHIQNLLDQTWKKMNKDRVINSPSSKYFSETIINLARISHCTYQYGDGHGAPDTLAKNRIKALILEPIN.

Residues 1–41 constitute a chloroplast transit peptide; the sequence is MLLNSSFISLPSFFKSQELGRTNLLIHRNGSPLLCYATNTN. (2E)-geranyl diphosphate is bound by residues arginine 296, aspartate 334, aspartate 338, arginine 475, and asparagine 478. Residues aspartate 334 and aspartate 338 each coordinate Mg(2+). Positions 334–338 match the DDXXD motif motif; sequence DDIYD. Mg(2+)-binding residues include asparagine 478, threonine 482, and glutamate 486.

Belongs to the terpene synthase family. Tpsb subfamily. It depends on Mg(2+) as a cofactor. Mn(2+) is required as a cofactor. In terms of tissue distribution, expressed in leaves.

Its subcellular location is the plastid. The protein resides in the chloroplast stroma. The catalysed reaction is (2E)-geranyl diphosphate = tricyclene + diphosphate. It carries out the reaction (2E)-geranyl diphosphate = (E)-beta-ocimene + diphosphate. It functions in the pathway secondary metabolite biosynthesis; terpenoid biosynthesis. Its function is as follows. Promotes the emission of terpenes volatile organic compounds (VOC) in response to damage mediated by arthropod herbivores (e.g. Spodoptera exigua), probably to attract natural enemies of the herbivores. The chain is Tricyclene synthase TPS4, chloroplastic (TPS4) from Medicago truncatula (Barrel medic).